The chain runs to 137 residues: Nucleoside diphosphate kinase (137 aa).

ATP is bound by residues Lys-10, Phe-58, Arg-86, Thr-92, Arg-103, and Asn-113. The active-site Pros-phosphohistidine intermediate is the His-116.

Belongs to the NDK family. In terms of assembly, homotetramer. It depends on Mg(2+) as a cofactor.

The protein localises to the cytoplasm. The catalysed reaction is a 2'-deoxyribonucleoside 5'-diphosphate + ATP = a 2'-deoxyribonucleoside 5'-triphosphate + ADP. It carries out the reaction a ribonucleoside 5'-diphosphate + ATP = a ribonucleoside 5'-triphosphate + ADP. Its function is as follows. Major role in the synthesis of nucleoside triphosphates other than ATP. The ATP gamma phosphate is transferred to the NDP beta phosphate via a ping-pong mechanism, using a phosphorylated active-site intermediate. The polypeptide is Nucleoside diphosphate kinase (Helicobacter pylori (strain Shi470)).